Reading from the N-terminus, the 139-residue chain is Histone H2AX (139 aa).

Residues 1-24 (MSSTATTKGGRGKPKASKSVSRSS) are disordered. The residue at position 136 (serine 136) is a Phosphoserine; by ATM and ATR. The short motif at 136-137 (SQ) is the [ST]-Q motif element.

Belongs to the histone H2A family. The nucleosome is a histone octamer containing two molecules each of H2A, H2B, H3 and H4 assembled in one H3-H4 heterotetramer and two H2A-H2B heterodimers. The octamer wraps approximately 147 bp of DNA. Interacts with numerous proteins required for DNA damage signaling and repair when phosphorylated on Ser-136. In terms of processing, phosphorylated on Ser-136 (to form gamma-H2AX) in response to DNA double strand breaks (DSBs) generated by exogenous genotoxic agents and by stalled replication forks, and may also occur during meiotic recombination events. Phosphorylation can extend up to several thousand nucleosomes from the actual site of the DSB and may mark the surrounding chromatin for recruitment of proteins required for DNA damage signaling and repair. Widespread phosphorylation may also serve to amplify the damage signal or aid repair of persistent lesions. Phosphorylation of Ser-136 in response to ionizing radiation is mediated by ATM while defects in DNA replication induce Ser-136 phosphorylation subsequent to activation of ATR. Dephosphorylation of Ser-136 by PP2A is required for DNA DSB repair.

Its subcellular location is the nucleus. The protein localises to the chromosome. Functionally, variant histone H2A which replaces conventional H2A in a subset of nucleosomes. Nucleosomes wrap and compact DNA into chromatin, limiting DNA accessibility to the cellular machineries which require DNA as a template. Histones thereby play a central role in transcription regulation, DNA repair, DNA replication and chromosomal stability. DNA accessibility is regulated via a complex set of post-translational modifications of histones, also called histone code, and nucleosome remodeling. Required for checkpoint-mediated arrest of cell cycle progression in response to low doses of ionizing radiation and for efficient repair of DNA double strand breaks (DSBs) specifically when modified by C-terminal phosphorylation. The chain is Histone H2AX (HIS2A) from Cicer arietinum (Chickpea).